The sequence spans 540 residues: Glucose-6-phosphate isomerase (540 aa).

Catalysis depends on E350, which acts as the Proton donor. Catalysis depends on residues H381 and K503.

Belongs to the GPI family.

The protein resides in the cytoplasm. The catalysed reaction is alpha-D-glucose 6-phosphate = beta-D-fructose 6-phosphate. It functions in the pathway carbohydrate biosynthesis; gluconeogenesis. Its pathway is carbohydrate degradation; glycolysis; D-glyceraldehyde 3-phosphate and glycerone phosphate from D-glucose: step 2/4. Functionally, catalyzes the reversible isomerization of glucose-6-phosphate to fructose-6-phosphate. This Burkholderia orbicola (strain MC0-3) protein is Glucose-6-phosphate isomerase.